We begin with the raw amino-acid sequence, 445 residues long: Phosphoglucosamine mutase (445 aa).

Residue serine 102 is the Phosphoserine intermediate of the active site. Residues serine 102, aspartate 241, aspartate 243, and aspartate 245 each coordinate Mg(2+). A Phosphoserine modification is found at serine 102.

It belongs to the phosphohexose mutase family. Requires Mg(2+) as cofactor. Post-translationally, activated by phosphorylation.

The enzyme catalyses alpha-D-glucosamine 1-phosphate = D-glucosamine 6-phosphate. Its function is as follows. Catalyzes the conversion of glucosamine-6-phosphate to glucosamine-1-phosphate. In Rhodococcus opacus (strain B4), this protein is Phosphoglucosamine mutase.